A 122-amino-acid chain; its full sequence is Large ribosomal subunit protein bL12 (122 aa).

It belongs to the bacterial ribosomal protein bL12 family. Homodimer. Part of the ribosomal stalk of the 50S ribosomal subunit. Forms a multimeric L10(L12)X complex, where L10 forms an elongated spine to which 2 to 4 L12 dimers bind in a sequential fashion. Binds GTP-bound translation factors.

In terms of biological role, forms part of the ribosomal stalk which helps the ribosome interact with GTP-bound translation factors. Is thus essential for accurate translation. The protein is Large ribosomal subunit protein bL12 of Mycoplasma capricolum subsp. capricolum (strain California kid / ATCC 27343 / NCTC 10154).